Consider the following 556-residue polypeptide: Oxygen-dependent choline dehydrogenase (556 aa).

Residue 6 to 35 coordinates FAD; it reads DYIIIGAGSAGNVLAARLTEDPGVSVLLLE. The active-site Proton acceptor is histidine 475.

This sequence belongs to the GMC oxidoreductase family. FAD serves as cofactor.

It carries out the reaction choline + A = betaine aldehyde + AH2. The catalysed reaction is betaine aldehyde + NAD(+) + H2O = glycine betaine + NADH + 2 H(+). The protein operates within amine and polyamine biosynthesis; betaine biosynthesis via choline pathway; betaine aldehyde from choline (cytochrome c reductase route): step 1/1. Its function is as follows. Involved in the biosynthesis of the osmoprotectant glycine betaine. Catalyzes the oxidation of choline to betaine aldehyde and betaine aldehyde to glycine betaine at the same rate. This Xanthomonas campestris pv. campestris (strain 8004) protein is Oxygen-dependent choline dehydrogenase.